The chain runs to 96 residues: Co-chaperonin GroES (96 aa).

It belongs to the GroES chaperonin family. In terms of assembly, heptamer of 7 subunits arranged in a ring. Interacts with the chaperonin GroEL.

It is found in the cytoplasm. Functionally, together with the chaperonin GroEL, plays an essential role in assisting protein folding. The GroEL-GroES system forms a nano-cage that allows encapsulation of the non-native substrate proteins and provides a physical environment optimized to promote and accelerate protein folding. GroES binds to the apical surface of the GroEL ring, thereby capping the opening of the GroEL channel. This chain is Co-chaperonin GroES, found in Buchnera aphidicola subsp. Myzus persicae (Myzus persicae primary endosymbiont).